The chain runs to 147 residues: uncharacterized protein (147 aa).

A run of 2 helical transmembrane segments spans residues 42 to 62 (WASL…SPEP) and 64 to 84 (LILQ…ATAF).

It localises to the cell membrane. This is an uncharacterized protein from Bacillus subtilis (strain 168).